A 190-amino-acid polypeptide reads, in one-letter code: RNA pyrophosphohydrolase (190 aa).

In terms of domain architecture, Nudix hydrolase spans 6-149 (GYRPNVGIIL…KRDVYTQALN (144 aa)). Positions 38–59 (GGIKYGESPVQAMYRELHEEVG) match the Nudix box motif. A disordered region spans residues 167–190 (QRVHGPRSTDSPSSETDGHAHIAG).

The protein belongs to the Nudix hydrolase family. RppH subfamily. A divalent metal cation serves as cofactor.

Accelerates the degradation of transcripts by removing pyrophosphate from the 5'-end of triphosphorylated RNA, leading to a more labile monophosphorylated state that can stimulate subsequent ribonuclease cleavage. This Bordetella pertussis (strain Tohama I / ATCC BAA-589 / NCTC 13251) protein is RNA pyrophosphohydrolase.